The following is a 546-amino-acid chain: Autophagy-related protein 22 (546 aa).

The next 3 membrane-spanning stretches (helical) occupy residues 64–84 (IAVA…DIAY), 102–122 (ILFL…AAIL), and 124–144 (IVGN…LPGL). Residues 160–185 (SEGLQDGLRDVHEDTDEENTGSVSRE) form a disordered region. The next 8 helical transmembrane spans lie at 244-264 (AIGF…VTAL), 273-293 (LAIG…CIGL), 333-353 (IFLL…YAAI), 365-385 (PKII…SVLV), 405-425 (VLLA…AGLV), 435-455 (GEMY…LSYS), 473-493 (SLFA…VGLI), and 503-523 (GFLF…RVAV).

It belongs to the ATG22 family.

It is found in the vacuole membrane. In terms of biological role, vacuolar effluxer which mediate the efflux of amino acids resulting from autophagic degradation. The release of autophagic amino acids allows the maintenance of protein synthesis and viability during nitrogen starvation. The sequence is that of Autophagy-related protein 22 (ATG22) from Cryptococcus neoformans var. neoformans serotype D (strain B-3501A) (Filobasidiella neoformans).